A 152-amino-acid chain; its full sequence is UPF0266 membrane protein PM0830 (152 aa).

The next 3 helical transmembrane spans lie at 1-21, 45-65, and 66-86; these read MMIINVLLCLGIFCFLLYAFY, KDALIFSLLIGIIIYQTYTNL, and SSATLYLLTALILLSVYAAFI.

It belongs to the UPF0266 family.

The protein resides in the cell inner membrane. This Pasteurella multocida (strain Pm70) protein is UPF0266 membrane protein PM0830.